Here is a 347-residue protein sequence, read N- to C-terminus: Holliday junction branch migration complex subunit RuvB (347 aa).

The interval 1–182 (MSAQNPVLTP…FGIPVRLSFY (182 aa)) is large ATPase domain (RuvB-L). ATP contacts are provided by residues Leu-21, Arg-22, Gly-63, Lys-66, Thr-67, Thr-68, 129 to 131 (EDF), Arg-172, Tyr-182, and Arg-219. Thr-67 lines the Mg(2+) pocket. The interval 183 to 253 (TVEELELIVR…IADEALTRLL (71 aa)) is small ATPAse domain (RuvB-S). Positions 256-347 (NMGLDQLDTR…QFRLTLEDDD (92 aa)) are head domain (RuvB-H). 3 residues coordinate DNA: Arg-292, Arg-311, and Arg-316.

This sequence belongs to the RuvB family. In terms of assembly, homohexamer. Forms an RuvA(8)-RuvB(12)-Holliday junction (HJ) complex. HJ DNA is sandwiched between 2 RuvA tetramers; dsDNA enters through RuvA and exits via RuvB. An RuvB hexamer assembles on each DNA strand where it exits the tetramer. Each RuvB hexamer is contacted by two RuvA subunits (via domain III) on 2 adjacent RuvB subunits; this complex drives branch migration. In the full resolvosome a probable DNA-RuvA(4)-RuvB(12)-RuvC(2) complex forms which resolves the HJ.

The protein resides in the cytoplasm. The enzyme catalyses ATP + H2O = ADP + phosphate + H(+). In terms of biological role, the RuvA-RuvB-RuvC complex processes Holliday junction (HJ) DNA during genetic recombination and DNA repair, while the RuvA-RuvB complex plays an important role in the rescue of blocked DNA replication forks via replication fork reversal (RFR). RuvA specifically binds to HJ cruciform DNA, conferring on it an open structure. The RuvB hexamer acts as an ATP-dependent pump, pulling dsDNA into and through the RuvAB complex. RuvB forms 2 homohexamers on either side of HJ DNA bound by 1 or 2 RuvA tetramers; 4 subunits per hexamer contact DNA at a time. Coordinated motions by a converter formed by DNA-disengaged RuvB subunits stimulates ATP hydrolysis and nucleotide exchange. Immobilization of the converter enables RuvB to convert the ATP-contained energy into a lever motion, pulling 2 nucleotides of DNA out of the RuvA tetramer per ATP hydrolyzed, thus driving DNA branch migration. The RuvB motors rotate together with the DNA substrate, which together with the progressing nucleotide cycle form the mechanistic basis for DNA recombination by continuous HJ branch migration. Branch migration allows RuvC to scan DNA until it finds its consensus sequence, where it cleaves and resolves cruciform DNA. This Allorhizobium ampelinum (strain ATCC BAA-846 / DSM 112012 / S4) (Agrobacterium vitis (strain S4)) protein is Holliday junction branch migration complex subunit RuvB.